The sequence spans 658 residues: MPLFDLKSPYPPAGDQPQAIEALTKSLKNNNHYQTLVGVTGSGKTYTMANIIAQTNKPALIMSHNKTLCAQLYSEFKAFFPHNRVEYFISHFDYYQPESYIPRRDLFIEKDSSINDDLERLRLSATTSLLGYDDVIVIASVSANYGLGNPEEYLKVMEKIKVGEKRAYKSFLLKLVEMGYSRNEVVFDRGSFRATGECVDIFPAYNDAEFIRIEFFGDEIERIAVFDALERNEIKRLDSVMLYAASQFAVGSERLNLAVKSIEDELALRLKFFKEQDKMLEYNRLKQRTEYDLEMISATGVCKGIENYARHFTGKAPNETPFCLFDYLGIFEREFLVIVDESHVSLPQFGGMYAGDMSRKSVLVEYGFRLPSALDNRPLKFDEFIHKNCQFLFVSATPNKLELELSQKNVAEQIIRPTGLLDPKFEVRDSDKQVQDLFDEIKSVVARGERVLITTLTKKMAEELCKYYAEWGLKVRYMHSEIDAIERNHIIRSLRLKEFDVLIGINLLREGLDLPEVSLVAIMDADKEGFLRSETSLIQTMGRAARNANGKVLLYAKKTTQSMQKAFEITSYRRAKQEEFNKIHNITPKTVTRALEEELKLRDDEIKIAKALKKDKMPKSEREKIIKELDKKMRERAKNLDFEEAMRLRDEIAQLRTL.

A Helicase ATP-binding domain is found at 25-416 (KSLKNNNHYQ…QKNVAEQIIR (392 aa)). 38-45 (GVTGSGKT) provides a ligand contact to ATP. The Beta-hairpin signature appears at 91–114 (HFDYYQPESYIPRRDLFIEKDSSI). Residues 433–607 (QVQDLFDEIK…ELKLRDDEIK (175 aa)) form the Helicase C-terminal domain. The region spanning 623 to 658 (EKIIKELDKKMRERAKNLDFEEAMRLRDEIAQLRTL) is the UVR domain.

The protein belongs to the UvrB family. In terms of assembly, forms a heterotetramer with UvrA during the search for lesions. Interacts with UvrC in an incision complex.

It localises to the cytoplasm. Functionally, the UvrABC repair system catalyzes the recognition and processing of DNA lesions. A damage recognition complex composed of 2 UvrA and 2 UvrB subunits scans DNA for abnormalities. Upon binding of the UvrA(2)B(2) complex to a putative damaged site, the DNA wraps around one UvrB monomer. DNA wrap is dependent on ATP binding by UvrB and probably causes local melting of the DNA helix, facilitating insertion of UvrB beta-hairpin between the DNA strands. Then UvrB probes one DNA strand for the presence of a lesion. If a lesion is found the UvrA subunits dissociate and the UvrB-DNA preincision complex is formed. This complex is subsequently bound by UvrC and the second UvrB is released. If no lesion is found, the DNA wraps around the other UvrB subunit that will check the other stand for damage. In Helicobacter pylori (strain J99 / ATCC 700824) (Campylobacter pylori J99), this protein is UvrABC system protein B.